Reading from the N-terminus, the 67-residue chain is Large ribosomal subunit protein uL29 (67 aa).

This sequence belongs to the universal ribosomal protein uL29 family.

The polypeptide is Large ribosomal subunit protein uL29 (Solibacter usitatus (strain Ellin6076)).